The sequence spans 3919 residues: Intermembrane lipid transfer protein Vps13D (3919 aa).

The Chorein N-terminal domain maps to 4 to 114 (DLITWVLNTY…QDLEYKLAVL (111 aa)). A disordered region spans residues 706-736 (TSDDDETYLTPCSTPPASEKSGSESPTLLEN). Residues 2292-2334 (KADSDLEKAAPLVAMGFEISDCLYAMQINNWRINDAAIWLSQQ) form the UBA domain. Residues 2837 to 3113 (ELYISAPVWI…YVMDDPLGQQ (277 aa)) enclose the SHR-BD domain. The interval 3749-3768 (VRETSRDSHRNAPERKRLPR) is disordered. Residues 3751-3764 (ETSRDSHRNAPERK) show a composition bias toward basic and acidic residues.

The protein belongs to the VPS13 family. Expressed in intestinal cells (at protein level).

It localises to the cytoplasm. The protein resides in the lysosome. Its function is as follows. Mediates the transfer of lipids between membranes at organelle contact sites. Functions in promoting mitochondrial clearance by mitochondrial autophagy (mitophagy), also possibly by positively regulating mitochondrial fission. Mitophagy plays an important role in regulating cell health and mitochondrial size and homeostasis. The sequence is that of Intermembrane lipid transfer protein Vps13D from Drosophila melanogaster (Fruit fly).